The sequence spans 150 residues: D-galactose-binding lectin (150 aa).

Residues histidine 16 and glycine 19 each contribute to the D-galactose site. An N-linked (GlcNAc...) asparagine glycan is attached at asparagine 26. D-galactose is bound by residues aspartate 35–histidine 37, histidine 64, and glycine 67. N-linked (GlcNAc...) asparagine glycosylation is present at asparagine 74. D-galactose is bound by residues aspartate 83 to histidine 85, histidine 108, and glycine 111. Asparagine 118 carries an N-linked (GlcNAc...) asparagine glycan. Aspartate 127–histidine 129 provides a ligand contact to D-galactose.

In terms of assembly, oligomerizes in solution. Post-translationally, the N-terminus is blocked. Expressed in mantle. Expressed 51 and 1.6 fold in mantle and gonads, respectively, relative to that in hemocytes. Expressed at a much lower level in other tissues tested including gill, muscle and hepatopancreas.

Hemagglutinating activity does not require Ca(2+) ions. Hemagglutinating activity is inhibited by porcine stomach mucin (PSM), bovine submaxillary mucin (BSM) and fetuin. Agglutination of V.proteolyticus bacteria is inhibited by D-galactose, but not by D-glucose. Fungal binding is inhibited by D-galactose, but not by pathogen-associated molecular patterns (PAMPs) including lipopolysaccharide (LPS), peptidoglycan and beta-glucan. In terms of biological role, D-galactose-binding lectin. Binds both alpha and beta anomer of galactose (Gal). Binds strongly to branched beta-Gal-terminated glycans and weakly to unbranched glycans with alpha-Gal on the end of chains. Has strong affinity for both Gal and GalNAc. Binds glycoproteins containing mucin-type chains. Has hemagglutinating activity towards human group A erythrocytes. Has hemagglutinating activity towards rabbit erythrocytes. Agglutinates V.proteolyticus bacteria. Binds strongly to fungi including species from genera Aspergillus, Alternaria, Fusarium and Haematonectria, and to a lesser extent to fungi from genera Trichoderma. Decreases conidia germination and hyphal growth of fungi. At high concentration, stimulates secretion of cytokines TNF-alpha and IFN-gamma from human peripheral blood cells, and at low concentration reduces hyperexpression of cytokine IL-10 in these cells, indicative of immunomodulatory capability. However, has no effect on IL-4 production. Recognizes pathogen-associated molecular patterns (PAMPs) and binds to peptidoglycan from S.aureus, but has only little binding to beta-1,3-glucan from E.gracilis and lipopolysaccharide (LPS) from E.coli. May be involved in innate immunity acting as an antibacterial or antifungal agent recognizing carbohydrate ligands on the surface of pathogens. The protein is D-galactose-binding lectin of Mytilus trossulus (Blue mussel).